We begin with the raw amino-acid sequence, 446 residues long: Citrate/sodium symporter (446 aa).

The next 5 membrane-spanning stretches (helical) occupy residues 23-43 (IFGM…LSHF), 46-66 (AIPT…AIFG), 79-99 (IGGA…AGIF), 110-130 (VMDK…GAIL), and 148-168 (ILAG…CFGI). Na(+) is bound by residues Ile-181 and Gly-183. Citrate contacts are provided by Asn-186 and Gly-187. The next 5 helical transmembrane spans lie at 213-233 (IAIL…LDMI), 267-287 (ETAV…VVAK), 289-309 (ILPS…LIVA), 335-355 (QLLW…QEII), and 364-384 (VIAA…GWLI). Na(+) is bound by residues Met-399 and Asn-401. Citrate contacts are provided by Arg-402, Gly-404, Ser-405, and Arg-428. The chain crosses the membrane as a helical span at residues 425–445 (ISSRLGGGIVLVIASIVFSMM).

It belongs to the 2-hydroxycarboxylate transporter (2-HCT) (TC 2.A.24) family. As to quaternary structure, homodimer.

It localises to the cell inner membrane. It carries out the reaction citrate(out) + 2 Na(+)(out) = citrate(in) + 2 Na(+)(in). Functionally, secondary active transporter that catalyzes the uptake of citrate across the membrane with the concomitant uptake of sodium. Is specific for citrate. In Salmonella dublin, this protein is Citrate/sodium symporter.